Reading from the N-terminus, the 226-residue chain is Uridylate kinase (226 aa).

Residue 9 to 10 (GS) coordinates ATP. G46 provides a ligand contact to UMP. The ATP site is built by G47 and R51. Residues D68 and 116-122 (THPGHTT) contribute to the UMP site. ATP is bound by residues T142, N143, Y148, and D151.

It belongs to the UMP kinase family. In terms of assembly, homohexamer.

The protein resides in the cytoplasm. The catalysed reaction is UMP + ATP = UDP + ADP. The protein operates within pyrimidine metabolism; CTP biosynthesis via de novo pathway; UDP from UMP (UMPK route): step 1/1. Its activity is regulated as follows. Inhibited by UTP. Its function is as follows. Catalyzes the reversible phosphorylation of UMP to UDP. The protein is Uridylate kinase of Methanocaldococcus jannaschii (strain ATCC 43067 / DSM 2661 / JAL-1 / JCM 10045 / NBRC 100440) (Methanococcus jannaschii).